A 738-amino-acid chain; its full sequence is Glucan 1,4-alpha-glucosidase SusB (738 aa).

An N-terminal signal peptide occupies residues 1 to 21; the sequence is MKKRKILSLIAFLCISFIANA. Glu-194 contributes to the Ca(2+) binding site. Substrate-binding positions include 215–217, 437–439, and 507–508; these read PNS, HHE, and HE. Ca(2+) is bound by residues Glu-508, Glu-526, and Glu-532. Glu-532 acts as the Proton donor/acceptor in catalysis.

It belongs to the glycosyl hydrolase 97 family. In terms of assembly, monomer. Ca(2+) is required as a cofactor.

Its subcellular location is the periplasm. The enzyme catalyses Hydrolysis of terminal (1-&gt;4)-linked alpha-D-glucose residues successively from non-reducing ends of the chains with release of beta-D-glucose.. It participates in glycan degradation; starch degradation. In terms of biological role, glucoamylase that hydrolyzes alpha-1,4-glucosidic linkages, alpha-1,6-, alpha-1,3- and alpha-1,2-glucosidic linkages during starch degradation. This is Glucan 1,4-alpha-glucosidase SusB (susB) from Bacteroides thetaiotaomicron (strain ATCC 29148 / DSM 2079 / JCM 5827 / CCUG 10774 / NCTC 10582 / VPI-5482 / E50).